The primary structure comprises 191 residues: Photosystem I assembly protein Ycf4 (191 aa).

The next 2 membrane-spanning stretches (helical) occupy residues 34–54 and 68–88; these read VASM…SSYF and IFVP…LLAI.

This sequence belongs to the Ycf4 family.

It is found in the cellular thylakoid membrane. Seems to be required for the assembly of the photosystem I complex. The protein is Photosystem I assembly protein Ycf4 of Prochlorococcus marinus (strain NATL1A).